A 61-amino-acid polypeptide reads, in one-letter code: Large ribosomal subunit protein bL32 (61 aa).

This sequence belongs to the bacterial ribosomal protein bL32 family.

The chain is Large ribosomal subunit protein bL32 from Phytoplasma mali (strain AT).